The sequence spans 226 residues: Triosephosphate isomerase (226 aa).

Residue His91 is the Electrophile of the active site. The active-site Proton acceptor is Glu163. Substrate-binding residues include Gly169 and Ser207.

The protein belongs to the triosephosphate isomerase family. As to quaternary structure, homodimer.

The protein localises to the cytoplasm. It catalyses the reaction D-glyceraldehyde 3-phosphate = dihydroxyacetone phosphate. It functions in the pathway carbohydrate biosynthesis; gluconeogenesis. The protein operates within carbohydrate degradation; glycolysis; D-glyceraldehyde 3-phosphate from glycerone phosphate: step 1/1. Involved in the gluconeogenesis. Catalyzes stereospecifically the conversion of dihydroxyacetone phosphate (DHAP) to D-glyceraldehyde-3-phosphate (G3P). The protein is Triosephosphate isomerase of Rhizobium etli (strain ATCC 51251 / DSM 11541 / JCM 21823 / NBRC 15573 / CFN 42).